A 374-amino-acid chain; its full sequence is Phosphate-binding protein PstS1 (374 aa).

A signal peptide spans 1-23 (MKIRLHTLLAVLTAAPLLLAAAG). Cys-24 carries the N-palmitoyl cysteine lipid modification. Residue Cys-24 is the site of S-diacylglycerol cysteine attachment. The interval 25 to 48 (GSKPPSGSPETGAGAGTVATTPAS) is disordered. Residues 58 to 60 (STL), Ser-88, Asp-106, and 189 to 191 (SGD) each bind phosphate.

It belongs to the PstS family. As to quaternary structure, the complex is composed of two ATP-binding proteins (PstB), two transmembrane proteins (PstC and PstA) and a solute-binding protein (PstS).

Its subcellular location is the cell membrane. It localises to the secreted. Functionally, functions in inorganic phosphate uptake, a phosphate-binding protein, although probably not the main uptake protein under phosphate starvation. Part of the ABC transporter complex PstSACB involved in phosphate import. In terms of biological role, a host TLR2 agonist (toll-like receptor), requires both host TLR1 and TLR2 as coreceptors. In Mycobacterium bovis (strain BCG / Pasteur 1173P2), this protein is Phosphate-binding protein PstS1 (pstS1).